A 180-amino-acid polypeptide reads, in one-letter code: Endoribonuclease YbeY (180 aa).

Zn(2+)-binding residues include His-118, His-122, and His-128.

This sequence belongs to the endoribonuclease YbeY family. Requires Zn(2+) as cofactor.

It is found in the cytoplasm. In terms of biological role, single strand-specific metallo-endoribonuclease involved in late-stage 70S ribosome quality control and in maturation of the 3' terminus of the 16S rRNA. This chain is Endoribonuclease YbeY, found in Rhodococcus erythropolis (strain PR4 / NBRC 100887).